A 332-amino-acid polypeptide reads, in one-letter code: Glycerol-3-phosphate dehydrogenase [NAD(P)+] (332 aa).

Serine 11, phenylalanine 12, lysine 32, and lysine 106 together coordinate NADPH. Sn-glycerol 3-phosphate is bound by residues lysine 106, glycine 137, and serine 139. Position 141 (alanine 141) interacts with NADPH. Residues lysine 192, aspartate 245, serine 255, arginine 256, and asparagine 257 each contribute to the sn-glycerol 3-phosphate site. The active-site Proton acceptor is the lysine 192. An NADPH-binding site is contributed by arginine 256. Residues valine 280 and glutamate 282 each coordinate NADPH.

It belongs to the NAD-dependent glycerol-3-phosphate dehydrogenase family.

The protein resides in the cytoplasm. It carries out the reaction sn-glycerol 3-phosphate + NAD(+) = dihydroxyacetone phosphate + NADH + H(+). It catalyses the reaction sn-glycerol 3-phosphate + NADP(+) = dihydroxyacetone phosphate + NADPH + H(+). Its pathway is membrane lipid metabolism; glycerophospholipid metabolism. Catalyzes the reduction of the glycolytic intermediate dihydroxyacetone phosphate (DHAP) to sn-glycerol 3-phosphate (G3P), the key precursor for phospholipid synthesis. This is Glycerol-3-phosphate dehydrogenase [NAD(P)+] from Staphylococcus carnosus (strain TM300).